The following is a 172-amino-acid chain: Myosin regulatory light polypeptide 9 (172 aa).

Basic residues predominate over residues 1–16 (MSSKRAKAKTTKKRPQ). A disordered region spans residues 1 to 20 (MSSKRAKAKTTKKRPQRATS). Ser2 carries the N-acetylserine modification. Thr19 is modified (phosphothreonine; by MLCK, CIT and ROCK2). Ser20 carries the post-translational modification Phosphoserine; by CDC42BP, CIT, MLCK, PAK1, ROCK1, ROCK2, DAPK1, DAPK2 and ZIPK/DAPK3. 3 consecutive EF-hand domains span residues 29-64 (SQIQ…LGKN), 98-133 (DPED…MGDR), and 134-169 (FTDE…GAKD). Residues Asp42, Asn44, Asp46, and Asp53 each contribute to the Ca(2+) site.

In terms of assembly, myosin is a hexamer of 2 heavy chains and 4 light chains: interacts with myosin heavy chain MYO19. Interacts with LUZP1; the interaction results in inhibition of phosphorylation of MYL9 by DAPK3. Post-translationally, phosphorylation increases the actin-activated myosin ATPase activity and thereby regulates the contractile activity. It is required to generate the driving force in the migration of the cells but not necessary for localization of myosin-2 at the leading edge. Phosphorylation is required for myotube formation. Phosphorylated by DAPK3; DAPK3-mediated phosphorylation is inhibited by LUZP1. As to expression, smooth muscle tissues and in some, but not all, nonmuscle cells.

The protein localises to the cytoplasm. The protein resides in the cytoskeleton. Its subcellular location is the cell cortex. Functionally, myosin regulatory subunit that plays an important role in regulation of both smooth muscle and nonmuscle cell contractile activity via its phosphorylation. Implicated in cytokinesis, receptor capping, and cell locomotion. In myoblasts, may regulate PIEZO1-dependent cortical actomyosin assembly involved in myotube formation. This Homo sapiens (Human) protein is Myosin regulatory light polypeptide 9 (MYL9).